The sequence spans 252 residues: uncharacterized protein (252 aa).

Residues Ser195 and Ser209 each carry the phosphoserine modification.

As to expression, testis-specific. Highly expressed in spermatocytes (at protein level).

Its function is as follows. Essential for normal spermatogenesis and male fertility. This is an uncharacterized protein from Mus musculus (Mouse).